We begin with the raw amino-acid sequence, 309 residues long: DNA-directed RNA polymerase subunit alpha (309 aa).

The tract at residues 1–227 is alpha N-terminal domain (alpha-NTD); sequence MTFQVECVES…ALFEPLKNVS (227 aa). The alpha C-terminal domain (alpha-CTD) stretch occupies residues 237 to 309; that stretch reads EPTPESQTPI…GIKLQESKVS (73 aa).

The protein belongs to the RNA polymerase alpha chain family. As to quaternary structure, in cyanobacteria the RNAP catalytic core is composed of 2 alpha, 1 beta, 1 beta', 1 gamma and 1 omega subunit. When a sigma factor is associated with the core the holoenzyme is formed, which can initiate transcription.

It catalyses the reaction RNA(n) + a ribonucleoside 5'-triphosphate = RNA(n+1) + diphosphate. Functionally, DNA-dependent RNA polymerase catalyzes the transcription of DNA into RNA using the four ribonucleoside triphosphates as substrates. This chain is DNA-directed RNA polymerase subunit alpha, found in Synechococcus elongatus (strain ATCC 33912 / PCC 7942 / FACHB-805) (Anacystis nidulans R2).